The following is a 258-amino-acid chain: Methylthioribulose-1-phosphate dehydratase (258 aa).

The interval 1-21 is disordered; it reads MCSPTTENNNNNNDHLVQSSD. Residue Cys105 coordinates substrate. Residues His123 and His125 each coordinate Zn(2+). Catalysis depends on Glu153, which acts as the Proton donor/acceptor. His210 provides a ligand contact to Zn(2+).

Belongs to the aldolase class II family. MtnB subfamily. The cofactor is Zn(2+).

The protein localises to the cytoplasm. It catalyses the reaction 5-(methylsulfanyl)-D-ribulose 1-phosphate = 5-methylsulfanyl-2,3-dioxopentyl phosphate + H2O. The protein operates within amino-acid biosynthesis; L-methionine biosynthesis via salvage pathway; L-methionine from S-methyl-5-thio-alpha-D-ribose 1-phosphate: step 2/6. Functionally, catalyzes the dehydration of methylthioribulose-1-phosphate (MTRu-1-P) into 2,3-diketo-5-methylthiopentyl-1-phosphate (DK-MTP-1-P). This chain is Methylthioribulose-1-phosphate dehydratase, found in Neurospora crassa (strain ATCC 24698 / 74-OR23-1A / CBS 708.71 / DSM 1257 / FGSC 987).